The sequence spans 228 residues: HTH-type transcriptional repressor RspR (228 aa).

The HTH gntR-type domain maps to 11 to 78; that stretch reads QPVNQQIYRI…PQRGSYVNKI (68 aa). The segment at residues 38–57 is a DNA-binding region (H-T-H motif); the sequence is EKEVSVRFNVSRQPVREAFI.

Functionally, repressor of the rspAB operon. Acts by binding directly to the upstream region of rspA. This is HTH-type transcriptional repressor RspR (rspR) from Escherichia coli (strain K12).